We begin with the raw amino-acid sequence, 294 residues long: N-acetylmuramic acid 6-phosphate etherase (294 aa).

An SIS domain is found at 54 to 217 (VTKSFEEEGR…STASMIGVGK (164 aa)). Glu-82 acts as the Proton donor in catalysis. Glu-113 is an active-site residue.

The protein belongs to the GCKR-like family. MurNAc-6-P etherase subfamily. As to quaternary structure, homodimer.

It catalyses the reaction N-acetyl-D-muramate 6-phosphate + H2O = N-acetyl-D-glucosamine 6-phosphate + (R)-lactate. It participates in amino-sugar metabolism; N-acetylmuramate degradation. Functionally, specifically catalyzes the cleavage of the D-lactyl ether substituent of MurNAc 6-phosphate, producing GlcNAc 6-phosphate and D-lactate. The sequence is that of N-acetylmuramic acid 6-phosphate etherase from Bacillus mycoides (strain KBAB4) (Bacillus weihenstephanensis).